Here is a 483-residue protein sequence, read N- to C-terminus: ATP synthase subunit beta (483 aa).

Glycine 167–threonine 174 contributes to the ATP binding site.

This sequence belongs to the ATPase alpha/beta chains family. F-type ATPases have 2 components, CF(1) - the catalytic core - and CF(0) - the membrane proton channel. CF(1) has five subunits: alpha(3), beta(3), gamma(1), delta(1), epsilon(1). CF(0) has three main subunits: a(1), b(2) and c(9-12). The alpha and beta chains form an alternating ring which encloses part of the gamma chain. CF(1) is attached to CF(0) by a central stalk formed by the gamma and epsilon chains, while a peripheral stalk is formed by the delta and b chains.

It localises to the cell membrane. The catalysed reaction is ATP + H2O + 4 H(+)(in) = ADP + phosphate + 5 H(+)(out). In terms of biological role, produces ATP from ADP in the presence of a proton gradient across the membrane. The catalytic sites are hosted primarily by the beta subunits. The chain is ATP synthase subunit beta from Paenarthrobacter aurescens (strain TC1).